A 194-amino-acid chain; its full sequence is Mu-like prophage FluMu protein gp37 (194 aa).

To phage Mu protein gp37.

This Haemophilus influenzae (strain ATCC 51907 / DSM 11121 / KW20 / Rd) protein is Mu-like prophage FluMu protein gp37.